Here is a 287-residue protein sequence, read N- to C-terminus: Pyridoxal kinase PdxY (287 aa).

Substrate is bound by residues Ser-10 and Thr-45 to Gln-46. Residues Asp-112, Ala-144, Glu-149, Lys-182, and Arg-209–Val-212 contribute to the ATP site. Substrate is bound at residue Asp-224.

This sequence belongs to the pyridoxine kinase family. PdxY subfamily. Homodimer. Requires Mg(2+) as cofactor.

The catalysed reaction is pyridoxal + ATP = pyridoxal 5'-phosphate + ADP + H(+). The protein operates within cofactor metabolism; pyridoxal 5'-phosphate salvage; pyridoxal 5'-phosphate from pyridoxal: step 1/1. Pyridoxal kinase involved in the salvage pathway of pyridoxal 5'-phosphate (PLP). Catalyzes the phosphorylation of pyridoxal to PLP. In Shigella dysenteriae serotype 1 (strain Sd197), this protein is Pyridoxal kinase PdxY.